The chain runs to 385 residues: Probable caffeine synthase 3 (385 aa).

S-adenosyl-L-homocysteine-binding residues include Tyr-18, Cys-62, Asn-67, Asp-101, Leu-102, Ser-140, and Phe-141. Residues Tyr-158, Gln-161, and Phe-162 each coordinate caffeine. Position 179 (Asn-179) interacts with Mg(2+). Residue Thr-238 coordinates caffeine. Positions 261, 263, and 264 each coordinate Mg(2+). Tyr-369 lines the caffeine pocket.

The protein belongs to the methyltransferase superfamily. Type-7 methyltransferase family. Mg(2+) serves as cofactor. In terms of tissue distribution, expressed in roots, stems, young and old leaves.

Its pathway is alkaloid biosynthesis. Its function is as follows. May be involved in the biosynthesis of caffeine. In Coffea arabica (Arabian coffee), this protein is Probable caffeine synthase 3.